We begin with the raw amino-acid sequence, 209 residues long: Claudin-4 (209 aa).

The Cytoplasmic segment spans residues 1–7 (MASMGLQ). The segment at 1-103 (MASMGLQVMG…GVLLSVVGGK (103 aa)) is interaction with EPHA2. The chain crosses the membrane as a helical span at residues 8 to 28 (VMGIALAVLGWLAVMLCCALP). Residues 29-81 (MWRVTAFIGSNIVTSQTIWEGLWMNCVVQSTGQMQCKVYDSLLALPQDLQAAR) lie on the Extracellular side of the membrane. Cys54 and Cys64 form a disulfide bridge. A helical transmembrane segment spans residues 82 to 102 (ALVIISIIVAALGVLLSVVGG). Residues 103–117 (KCTNCLEDESAKAKT) lie on the Cytoplasmic side of the membrane. The chain crosses the membrane as a helical span at residues 118 to 138 (MIVAGVVFLLAGLMVIVPVSW). At 139 to 160 (TAHNIIQDFYNPLVASGQKREM) the chain is on the extracellular side. A helical transmembrane segment spans residues 161 to 181 (GASLYVGWAASGLLLLGGGLL). Residues 182-209 (CCNCPPRTDKPYSAKYSAARSAAASNYV) lie on the Cytoplasmic side of the membrane. A Phosphotyrosine; by EPHA2 modification is found at Tyr208. Residues 208–209 (YV) form an interactions with TJP1, TJP2 and TJP3 region.

Belongs to the claudin family. As to quaternary structure, can form heteropolymeric strands with other claudins. Interacts with CLDN8. Interacts with CLDN1. Directly interacts with TJP1/ZO-1. Interacts with TJP2/ZO-2 and TJP3/ZO-3. Interacts with EPHA2; phosphorylates CLDN4 and may regulate tight junctions. (Microbial infection) Interacts (via both extracellular domains) with Clostridium perfringens enterotoxin CPE; the interaction may disrupt claudin assembly in tight junctions. Phosphorylated. Phosphorylation by EPHA2 is stimulated by EFNA1 and alters interaction with TJP1.

It is found in the cell junction. The protein localises to the tight junction. The protein resides in the cell membrane. The catalysed reaction is chloride(in) = chloride(out). It catalyses the reaction bromide(in) = bromide(out). It carries out the reaction iodide(out) = iodide(in). The enzyme catalyses fluoride(in) = fluoride(out). Can associate with other claudins to regulate tight junction structural and functional strand dynamics. May coassemble with CLDN8 into tight junction strands containing anion-selective channels that convey paracellular chloride permeability in renal collecting ducts. May integrate into CLDN3 strands to modulate localized tight junction barrier properties. May disrupt strand assembly of channel-forming CLDN2 and CLDN15 and inhibit cation conductance. Cannot form tight junction strands on its own. This is Claudin-4 from Homo sapiens (Human).